The sequence spans 88 residues: Centromere protein W (88 aa).

The protein belongs to the CENP-W/WIP1 family. In terms of assembly, heterodimer with CENPT; this dimer coassembles with CENPS-CENPX heterodimers at centromeres to form the tetrameric CENP-T-W-S-X complex, which is a subcomplex of the large constitutive centromere-associated network (CCAN, also known as the interphase centromere complex or ICEN). Interacts with NPM1. As to expression, highly expressed in ovary, liver, lung and pancreas and to a lower extent in breast and gastrointestinal tract cancers; such as those of the colon, rectum and stomach. Overexpressed in high grade breast invasive tumors. Expressed in many cancer cell types.

It localises to the nucleus. The protein resides in the chromosome. It is found in the centromere. The protein localises to the kinetochore. Its subcellular location is the nucleus matrix. It localises to the nucleolus. Its function is as follows. Component of the CENPA-NAC (nucleosome-associated) complex, a complex that plays a central role in assembly of kinetochore proteins, mitotic progression and chromosome segregation. The CENPA-NAC complex recruits the CENPA-CAD (nucleosome distal) complex and may be involved in incorporation of newly synthesized CENPA into centromeres. Part of a nucleosome-associated complex that binds specifically to histone H3-containing nucleosomes at the centromere, as opposed to nucleosomes containing CENPA. Component of the heterotetrameric CENP-T-W-S-X complex that binds and supercoils DNA, and plays an important role in kinetochore assembly. CENPW has a fundamental role in kinetochore assembly and function. It is one of the inner kinetochore proteins, with most further proteins binding downstream. Required for normal chromosome organization and normal progress through mitosis. The polypeptide is Centromere protein W (CENPW) (Homo sapiens (Human)).